A 523-amino-acid chain; its full sequence is Peptide chain release factor 3 (523 aa).

In terms of domain architecture, tr-type G spans 10 to 277; that stretch reads EKRRTFAIIS…SFVDLAPAPE (268 aa). GTP is bound by residues 19 to 26, 87 to 91, and 141 to 144; these read SHPDAGKT, DTPGH, and NKLD.

The protein belongs to the TRAFAC class translation factor GTPase superfamily. Classic translation factor GTPase family. PrfC subfamily.

It localises to the cytoplasm. Increases the formation of ribosomal termination complexes and stimulates activities of RF-1 and RF-2. It binds guanine nucleotides and has strong preference for UGA stop codons. It may interact directly with the ribosome. The stimulation of RF-1 and RF-2 is significantly reduced by GTP and GDP, but not by GMP. The polypeptide is Peptide chain release factor 3 (Lactobacillus acidophilus (strain ATCC 700396 / NCK56 / N2 / NCFM)).